The sequence spans 461 residues: Bifunctional protein GlmU (461 aa).

Residues 1–229 (MNKYVVILAA…FSESLGVNDR (229 aa)) form a pyrophosphorylase region. UDP-N-acetyl-alpha-D-glucosamine-binding positions include 8–11 (LAAG), Lys22, Gln72, and 77–78 (GT). Asp102 is a Mg(2+) binding site. UDP-N-acetyl-alpha-D-glucosamine contacts are provided by Gly139, Glu154, Asn169, and Asn227. Mg(2+) is bound at residue Asn227. The segment at 230 to 250 (IALAQATKIMQRRINEEHMKN) is linker. The tract at residues 251 to 461 (GVSFIDPDTA…LPLSKDKEWE (211 aa)) is N-acetyltransferase. Arg332 and Lys350 together coordinate UDP-N-acetyl-alpha-D-glucosamine. The active-site Proton acceptor is His362. Residues Tyr365 and Asn376 each contribute to the UDP-N-acetyl-alpha-D-glucosamine site. Residues 385–386 (NY), Ala422, and Arg439 contribute to the acetyl-CoA site.

This sequence in the N-terminal section; belongs to the N-acetylglucosamine-1-phosphate uridyltransferase family. It in the C-terminal section; belongs to the transferase hexapeptide repeat family. As to quaternary structure, homotrimer. Requires Mg(2+) as cofactor.

The protein localises to the cytoplasm. It catalyses the reaction alpha-D-glucosamine 1-phosphate + acetyl-CoA = N-acetyl-alpha-D-glucosamine 1-phosphate + CoA + H(+). The catalysed reaction is N-acetyl-alpha-D-glucosamine 1-phosphate + UTP + H(+) = UDP-N-acetyl-alpha-D-glucosamine + diphosphate. It functions in the pathway nucleotide-sugar biosynthesis; UDP-N-acetyl-alpha-D-glucosamine biosynthesis; N-acetyl-alpha-D-glucosamine 1-phosphate from alpha-D-glucosamine 6-phosphate (route II): step 2/2. It participates in nucleotide-sugar biosynthesis; UDP-N-acetyl-alpha-D-glucosamine biosynthesis; UDP-N-acetyl-alpha-D-glucosamine from N-acetyl-alpha-D-glucosamine 1-phosphate: step 1/1. Its pathway is bacterial outer membrane biogenesis; LPS lipid A biosynthesis. Functionally, catalyzes the last two sequential reactions in the de novo biosynthetic pathway for UDP-N-acetylglucosamine (UDP-GlcNAc). The C-terminal domain catalyzes the transfer of acetyl group from acetyl coenzyme A to glucosamine-1-phosphate (GlcN-1-P) to produce N-acetylglucosamine-1-phosphate (GlcNAc-1-P), which is converted into UDP-GlcNAc by the transfer of uridine 5-monophosphate (from uridine 5-triphosphate), a reaction catalyzed by the N-terminal domain. This chain is Bifunctional protein GlmU, found in Lactobacillus gasseri (strain ATCC 33323 / DSM 20243 / BCRC 14619 / CIP 102991 / JCM 1131 / KCTC 3163 / NCIMB 11718 / NCTC 13722 / AM63).